Here is a 396-residue protein sequence, read N- to C-terminus: D-alanine--D-alanine ligase (396 aa).

The ATP-grasp domain maps to 141–347 (KMLWQAAGLP…PQDLMAQLLS (207 aa)). An ATP-binding site is contributed by 174–229 (ETRLGYPLFVKPAQAGSSVGASAVQTRAPLIPAIEAAFQWDEVVLVERYVRAREIE). Residues Asp-301, Glu-314, and Asn-316 each coordinate Mg(2+). A disordered region spans residues 374 to 396 (AAHDPDAQGDDWDQRDSNPLPTA).

It belongs to the D-alanine--D-alanine ligase family. It depends on Mg(2+) as a cofactor. Requires Mn(2+) as cofactor.

Its subcellular location is the cytoplasm. It carries out the reaction 2 D-alanine + ATP = D-alanyl-D-alanine + ADP + phosphate + H(+). Its pathway is cell wall biogenesis; peptidoglycan biosynthesis. Its function is as follows. Cell wall formation. In Treponema pallidum (strain Nichols), this protein is D-alanine--D-alanine ligase.